We begin with the raw amino-acid sequence, 432 residues long: Adenylosuccinate synthetase 2 (432 aa).

GTP-binding positions include 13–19 (GDEGKGK) and 41–43 (GHT). Asp-14 acts as the Proton acceptor in catalysis. Positions 14 and 41 each coordinate Mg(2+). Residues 14 to 17 (DEGK), 39 to 42 (NAGH), Thr-130, Arg-144, Gln-225, Thr-240, and Arg-304 contribute to the IMP site. The active-site Proton donor is the His-42. 300–306 (ATTGRSR) contacts substrate. GTP contacts are provided by residues Arg-306, 332–334 (KLD), and 415–417 (STG).

This sequence belongs to the adenylosuccinate synthetase family. In terms of assembly, homodimer. Requires Mg(2+) as cofactor.

It is found in the cytoplasm. It catalyses the reaction IMP + L-aspartate + GTP = N(6)-(1,2-dicarboxyethyl)-AMP + GDP + phosphate + 2 H(+). It participates in purine metabolism; AMP biosynthesis via de novo pathway; AMP from IMP: step 1/2. Its function is as follows. Plays an important role in the de novo pathway of purine nucleotide biosynthesis. Catalyzes the first committed step in the biosynthesis of AMP from IMP. The chain is Adenylosuccinate synthetase 2 from Photorhabdus laumondii subsp. laumondii (strain DSM 15139 / CIP 105565 / TT01) (Photorhabdus luminescens subsp. laumondii).